Reading from the N-terminus, the 374-residue chain is Tomoregulin-2 (374 aa).

An N-terminal signal peptide occupies residues 1 to 40 (MVLWESPRQCSSWTLCEGFCWLLLLPVMLLIVARPVKLAA). The Extracellular portion of the chain corresponds to 41–320 (FPTSLSDCQT…VPGPVRFQYV (280 aa)). Kazal-like domains are found at residues 90 to 137 (VCQF…SCAT) and 181 to 229 (VCNI…RCQD). 6 disulfides stabilise this stretch: Cys91/Cys121, Cys95/Cys114, Cys103/Cys135, Cys182/Cys213, Cys186/Cys206, and Cys195/Cys227. Asn204 carries N-linked (GlcNAc...) (complex) asparagine; atypical glycosylation. A glycan (N-linked (GlcNAc...) asparagine) is linked at Asn230. Residues 261 to 301 (HHIPCPEHYNGFCMHGKCEHSINMQEPSCRCDAGYTGQHCE) form the EGF-like domain. 3 cysteine pairs are disulfide-bonded: Cys265/Cys278, Cys273/Cys289, and Cys291/Cys300. The tract at residues 303-320 (KDYSVLYVVPGPVRFQYV) is required for shedding. Residues 321–341 (LIAAVIGTIQIAVICVVVLCI) traverse the membrane as a helical segment. The Cytoplasmic portion of the chain corresponds to 342–374 (TRKCPRSNRIHRQKQNTGHYSSDNTTRASTRLI). The interval 353–374 (RQKQNTGHYSSDNTTRASTRLI) is disordered. Over residues 356–374 (QNTGHYSSDNTTRASTRLI) the composition is skewed to polar residues.

This sequence belongs to the tomoregulin family. O-glycosylated; contains chondroitin sulfate glycosaminoglycans. Post-translationally, a soluble form (TMEFF2-ECD) is produced by proteolytic shedding. This shedding can be induced by phorbol ester or pro-inflammatory cytokines such as TNFalpha, and is mediated by ADAM17. Highly expressed in adult and fetal brain, spinal cord and prostate. Expressed in all brain regions except the pituitary gland, with highest levels in amygdala and corpus callosum. Expressed in the pericryptal myofibroblasts and other stromal cells of normal colonic mucosa. Expressed in prostate carcinoma. Down-regulated in colorectal cancer. Present in Alzheimer disease plaques (at protein level). Isoform 3 is expressed weakly in testis and at high levels in normal and cancerous prostate.

It is found in the membrane. It localises to the secreted. Functionally, may be a survival factor for hippocampal and mesencephalic neurons. The shedded form up-regulates cancer cell proliferation, probably by promoting ERK1/2 phosphorylation. This is Tomoregulin-2 (TMEFF2) from Homo sapiens (Human).